An 891-amino-acid polypeptide reads, in one-letter code: UPF0182 protein Glov_0814 (891 aa).

The next 7 helical transmembrane spans lie at L6–Y26, G51–A71, I102–W122, F164–A184, I202–L222, T244–W264, and G266–M286.

Belongs to the UPF0182 family.

It is found in the cell membrane. The protein is UPF0182 protein Glov_0814 of Trichlorobacter lovleyi (strain ATCC BAA-1151 / DSM 17278 / SZ) (Geobacter lovleyi).